Here is a 363-residue protein sequence, read N- to C-terminus: G-protein coupled receptor 4 (363 aa).

The Extracellular portion of the chain corresponds to 1–8 (MGNGTWEG). Asn3 carries an N-linked (GlcNAc...) asparagine glycan. A helical membrane pass occupies residues 9 to 45 (CHVDSRVDHLFPPSLYIFVIGVGLPTNCLALWAAYRQ). Intrachain disulfides connect Cys9-Cys258 and Cys90-Cys168. Residues 46–49 (VRQR) lie on the Cytoplasmic side of the membrane. A helical transmembrane segment spans residues 50 to 80 (NELGVYLMNLSIADLLYICTLPLWVDYFLHH). The Extracellular portion of the chain corresponds to 81–85 (DNWIH). Residues 86 to 121 (GPGSCKLFGFIFYTNIYISIAFLCCISVDRYLAVAH) traverse the membrane as a helical segment. Residues 122 to 129 (PLRFARLR) are Cytoplasmic-facing. A helical transmembrane segment spans residues 130-156 (RVKTAVAVSSVVWATELGANSVPLFHD). Over 157 to 172 (ELFRDRYNHTFCFEKF) the chain is Extracellular. Positions 157–172 (ELFRDRYNHTFCFEKF) are extracellular loop 2 (ECL2). A glycan (N-linked (GlcNAc...) asparagine) is linked at Asn164. The chain crosses the membrane as a helical span at residues 173-210 (PMEGWVAWMNLYRVFVGFLFPWALMLLSYRGILRAVRG). Residues 211-214 (SVST) lie on the Cytoplasmic side of the membrane. The helical transmembrane segment at 215 to 250 (ERQEKAKIKRLALSLIAIVLVCFAPYHVLLLSRSAV) threads the bilayer. At 251-260 (YLGHPWDCGF) the chain is on the extracellular side. A helical membrane pass occupies residues 261–289 (EERVFSAYHSSLAFTSLNCVADPILYCLV). At 290-363 (NEGARSDVAK…QLKMLPPPAP (74 aa)) the chain is on the cytoplasmic side. Residues 344 to 363 (ASPPSQGDQVQLKMLPPPAP) form a disordered region.

This sequence belongs to the G-protein coupled receptor 1 family.

The protein localises to the cell membrane. Activated by a network of residues that connects an extracellular-facing cavity to Glu-145, a conserved charged residue buried in the transmembrane core of the receptor. Protonation likely drives conformational changes in extracellular loop 2 (ECL2), which stabilizes movement of transmembrane 3 (TM3) and a series of rearrangements that connect the extracellular-facing cavity to Glu-145, a residue only conserved in proton-sensing G-protein coupled receptors. Its function is as follows. Proton-sensing G-protein coupled receptor activated by extracellular pH, which is required to monitor pH changes and generate adaptive reactions. Activated by an optimal pH of 6.8-7.2. Ligand binding causes a conformation change that triggers signaling via guanine nucleotide-binding proteins (G proteins) and modulates the activity of downstream effectors, such as adenylate cyclase. GPR4 is mainly coupled to G(s) G proteins and mediates activation of adenylate cyclase activity. May also couple with G(q) and G(12)/G(13) G proteins. Acts as a key regulator of respiratory sensitivity to CO2/H(+) in brain retrotrapezoid nucleus neurons: acts by mediating detection of protons generated by the formation of carbonic acid in the blood, an important mechanism to impulse to breathe. Also acts as a regulator of acid secretion in the kidney collecting duct by maintaining acid-base homeostasis in the kidney. Acidosis-induced GPR4 activation increases paracellular gap formation and permeability of vascular endothelial cells, possibly through the G(12)/G(13)/Rho GTPase signaling pathway. The sequence is that of G-protein coupled receptor 4 (GPR4) from Sus scrofa (Pig).